We begin with the raw amino-acid sequence, 337 residues long: Phosphatidylglycerophosphate phosphatase PTPMT1 (337 aa).

The disordered stretch occupies residues 1-20 (MYIKELTETDEEKRERSVED). Residues Tyr-55 and Asp-133 each coordinate substrate. A Tyrosine-protein phosphatase domain is found at 73–220 (WWDRVAEFIL…VVEYYHVKVL (148 aa)). Cys-164 serves as the catalytic Phosphocysteine intermediate. A Glucan phosphatase signature motif CXAGXGR motif is present at residues 164-170 (CKAGRGR). 165–170 (KAGRGR) contributes to the substrate binding site.

Belongs to the protein-tyrosine phosphatase family. Non-receptor class dual specificity subfamily. In terms of tissue distribution, expressed in stems, roots, flowers, mature seeds and leaves.

It catalyses the reaction O-phospho-L-seryl-[protein] + H2O = L-seryl-[protein] + phosphate. It carries out the reaction O-phospho-L-threonyl-[protein] + H2O = L-threonyl-[protein] + phosphate. The catalysed reaction is O-phospho-L-tyrosyl-[protein] + H2O = L-tyrosyl-[protein] + phosphate. The enzyme catalyses a 1,2-diacyl-sn-glycero-3-phospho-(1'-sn-glycero-3'-phosphate) + H2O = a 1,2-diacyl-sn-glycero-3-phospho-(1'-sn-glycerol) + phosphate. It functions in the pathway phospholipid metabolism; phosphatidylglycerol biosynthesis; phosphatidylglycerol from CDP-diacylglycerol: step 2/2. Functionally, exhibits phosphatidylglycerophosphate phosphatase activity. Involved in root growth and columella cells organization. May possess protein phosphatase activity. This chain is Phosphatidylglycerophosphate phosphatase PTPMT1, found in Arabidopsis thaliana (Mouse-ear cress).